A 966-amino-acid polypeptide reads, in one-letter code: MFWKFDLNTTSHVDKLLDKEHVTLQELMDEDDILQECKAQNQKLLDFLCRQQCMEELVSLITQDPPLDMEEKVRFKYPNTACELLTCDVPQISDRLGGDESLLSLLYDFLDHEPPLNPLLASFFSKTIGNLIARKTEQVITFLKKKDKFISLVLKHIGTSALMDLLLRLVSCVEPAGLRQDVLHWLNEEKVIQRLVELIHPSQDEDRQSNASQTLCDIVRLGRDQGSQLQEALEPDPLLTALESQDCVEQLLKNMFDGDRTESCLVSGTQVLLTLLETRRVGTEGLVDSFSQGLERSYAVSSSVLHGIEPRLKDFHQLLLNPPKKKAILTTIGVLEEPLGNARLHGARLMAALLHTNTPSINQELCRLNTMDLLLDLFFKYTWNNFLHFQVELCIAAILSHAAREERTEASGSESRVEPPHENGNRSLETPQPAASLPDNTMVTHLFQKCCLVQRILEAWEANDHTQAAGGMRRGNMGHLTRIANAVVQNLERGPVQTHISEVIRGLPADCRGRWESFVEETLTETNRRNTVDLVSTHHLHSSSEDEDIEGAFPNELSLQQAFSDYQIQQMTANFVDQFGFNDEEFADQDDNINAPFDRIAEINFNIDADEDSPSAALFEACCSDRIQPFDDDEDEDIWEDSDTRCAARVMARPRFGAPHASESCSKNGPERGGQDGKASLEAHRDAPGAGAPPAPGKKEAPPVEGDSEGAMWTAVFDEPANSTPTAPGVVRDVGSSVWAAGTSAPEEKGWAKFTDFQPFCCSESGPRCSSPVDTECSHAEGSRSQGPEKASQASYFAVSPASPCAWNVCVTRKAPLLASDSSSSGGSHSEDGDQKAASAMDAVSRGPGREAPPLPTVARTEEAVGRVGCADSRLLSPACPAPKEVTAAPAVAVPPEATVAITTALSKAGPAIPTPAVSSALAVAVPLGPIMAVTAAPAMVATLGTVTKDGKTDAPPEGAALNGPV.

A Phosphoserine modification is found at serine 289. 2 stretches are compositionally biased toward basic and acidic residues: residues 408–424 (TEAS…HENG) and 669–687 (GPER…HRDA). Disordered stretches follow at residues 408–436 (TEAS…PAAS) and 657–707 (GAPH…VEGD). Phosphoserine occurs at positions 771 and 828. Positions 819-856 (ASDSSSSGGSHSEDGDQKAASAMDAVSRGPGREAPPLP) are disordered.

It belongs to the SAPS family. In terms of assembly, protein phosphatase 6 (PP6) holoenzyme is proposed to be a heterotrimeric complex formed by the catalytic subunit, a SAPS domain-containing subunit (PP6R) and an ankyrin repeat-domain containing regulatory subunit (ARS). Interacts with PPP6C and NFKBIE. Interacts with ANKRD28. Ubiquitously expressed with strongest expression in the testis followed by liver, heart, kidney, brain and placenta.

The protein resides in the cytoplasm. Regulatory subunit of protein phosphatase 6 (PP6). May function as a scaffolding PP6 subunit. Involved in the PP6-mediated dephosphorylation of NFKBIE opposing its degradation in response to TNF-alpha. The chain is Serine/threonine-protein phosphatase 6 regulatory subunit 2 (PPP6R2) from Homo sapiens (Human).